The sequence spans 88 residues: Putative membrane protein insertion efficiency factor (88 aa).

A disordered region spans residues 66–88 (DFVPPKKEKNADSEHSCKAHHHH). Over residues 69–82 (PPKKEKNADSEHSC) the composition is skewed to basic and acidic residues.

It belongs to the UPF0161 family.

It localises to the cell membrane. Functionally, could be involved in insertion of integral membrane proteins into the membrane. In Listeria monocytogenes serotype 4b (strain CLIP80459), this protein is Putative membrane protein insertion efficiency factor.